The chain runs to 79 residues: Small ribosomal subunit protein bS16 (79 aa).

The protein belongs to the bacterial ribosomal protein bS16 family.

This Desulfovibrio desulfuricans (strain ATCC 27774 / DSM 6949 / MB) protein is Small ribosomal subunit protein bS16.